A 611-amino-acid polypeptide reads, in one-letter code: Leucine aminopeptidase 2 (611 aa).

A peptide is bound by residues 135-137 (QCQ) and 265-270 (PYGGME). His294 is a binding site for Zn(2+). The active-site Proton acceptor is Glu295. Positions 298 and 317 each coordinate Zn(2+). Tyr383 (proton donor) is an active-site residue.

This sequence belongs to the peptidase M1 family. It depends on Zn(2+) as a cofactor.

Its subcellular location is the cytoplasm. It is found in the nucleus. It carries out the reaction an epoxide + H2O = an ethanediol. Functionally, aminopeptidase that preferentially cleaves di- and tripeptides. Also has low epoxide hydrolase activity (in vitro). Can hydrolyze the epoxide leukotriene LTA(4) but it forms preferentially 5,6-dihydroxy-7,9,11,14-eicosatetraenoic acid rather than the cytokine leukotriene B(4) as the product compared to the homologous mammalian enzyme (in vitro). This Chaetomium globosum (strain ATCC 6205 / CBS 148.51 / DSM 1962 / NBRC 6347 / NRRL 1970) (Soil fungus) protein is Leucine aminopeptidase 2.